The chain runs to 364 residues: 3-isopropylmalate dehydrogenase (364 aa).

79–92 (GPKWEHLPAAEQPE) provides a ligand contact to NAD(+). Positions 100, 110, 139, and 228 each coordinate substrate. Residues Asp228, Asp252, and Asp256 each contribute to the Mg(2+) site. 286–298 (GSAPDIAGKDIAN) contacts NAD(+).

The protein belongs to the isocitrate and isopropylmalate dehydrogenases family. LeuB type 1 subfamily. As to quaternary structure, homodimer. It depends on Mg(2+) as a cofactor. Requires Mn(2+) as cofactor.

It localises to the cytoplasm. The enzyme catalyses (2R,3S)-3-isopropylmalate + NAD(+) = 4-methyl-2-oxopentanoate + CO2 + NADH. Its pathway is amino-acid biosynthesis; L-leucine biosynthesis; L-leucine from 3-methyl-2-oxobutanoate: step 3/4. Its function is as follows. Catalyzes the oxidation of 3-carboxy-2-hydroxy-4-methylpentanoate (3-isopropylmalate) to 3-carboxy-4-methyl-2-oxopentanoate. The product decarboxylates to 4-methyl-2 oxopentanoate. This Sodalis glossinidius (strain morsitans) protein is 3-isopropylmalate dehydrogenase.